A 250-amino-acid polypeptide reads, in one-letter code: Hydroxyethylthiazole kinase (250 aa).

Substrate is bound at residue Met-39. The ATP site is built by Arg-114 and Thr-159. Gly-186 contributes to the substrate binding site.

It belongs to the Thz kinase family. It depends on Mg(2+) as a cofactor.

The catalysed reaction is 5-(2-hydroxyethyl)-4-methylthiazole + ATP = 4-methyl-5-(2-phosphooxyethyl)-thiazole + ADP + H(+). It functions in the pathway cofactor biosynthesis; thiamine diphosphate biosynthesis; 4-methyl-5-(2-phosphoethyl)-thiazole from 5-(2-hydroxyethyl)-4-methylthiazole: step 1/1. In terms of biological role, catalyzes the phosphorylation of the hydroxyl group of 4-methyl-5-beta-hydroxyethylthiazole (THZ). This chain is Hydroxyethylthiazole kinase, found in Lactococcus lactis subsp. lactis (strain IL1403) (Streptococcus lactis).